We begin with the raw amino-acid sequence, 515 residues long: Nectin-1 (515 aa).

A signal peptide spans 1 to 30; sequence MARMGLAGAAGRWWGLALGLTAFFLPGTHT. The region spanning 31–141 is the Ig-like V-type domain; that stretch reads QVVQVNDSMY…GNRESQLNLT (111 aa). At 31 to 354 the chain is on the extracellular side; sequence QVVQVNDSMY…GRRAGQMPTA (324 aa). N-linked (GlcNAc...) asparagine glycans are attached at residues Asn-36, Asn-72, Asn-139, Asn-202, Asn-286, Asn-297, and Asn-332. Cys-51 and Cys-124 are disulfide-bonded. Ig-like C2-type domains lie at 145–243 and 247–334; these read KPTN…TLNV and PEVT…VNIT. 2 cysteine pairs are disulfide-bonded: Cys-172–Cys-226 and Cys-269–Cys-316. Positions 282 to 299 are interaction with FGFR; sequence WTTLNGSLPKGVEAQNRT. The helical transmembrane segment at 355–375 threads the bilayer; that stretch reads IIGGVAGSVLLVLIVVGGIIV. The Cytoplasmic portion of the chain corresponds to 376–515; it reads ALRRRRHTFK…SFISKKEWYV (140 aa). The segment at 399–486 is disordered; sequence YSKAGIPQHH…DGYGDRTLGY (88 aa). Phosphoserine occurs at positions 421, 433, and 434. Tyr-435 carries the post-translational modification Phosphotyrosine. Basic and acidic residues predominate over residues 447–464; that stretch reads GERKVGGPHPKYDEDAKR. Position 509 is a phosphoserine (Ser-509).

Belongs to the nectin family. Cis- and trans-homodimer. Can form trans-heterodimers with NECTIN3 and with NECTIN4. Interaction between NECTIN1 and NECTIN3 on the pre- and postsynaptic sites, respectively, initiates the formation of puncta adherentia junctions between axons and dendrites. Interacts (via cytoplasmic domain) with AFDN (via PDZ domain); this interaction recruits NECTIN1 to cadherin-based adherens junctions and provides a connection with the actin cytoskeleton. Interacts with integrin alphaV/beta3. Interacts (via Ig-like C2-type domain 2) with FGFR1, FGFR2 and FGFR3. As to quaternary structure, (Microbial infection) Interacts with herpes pseudorabies virus/PRV envelope glycoprotein D.

Its subcellular location is the cell membrane. The protein resides in the cell junction. It is found in the adherens junction. It localises to the presynaptic cell membrane. In terms of biological role, cell adhesion molecule that promotes cell-cell contacts and plays important roles in the development of the nervous system. Acts by forming homophilic or heterophilic trans-dimers. Heterophilic interactions have been detected between NECTIN1 and NECTIN3 and between NECTIN1 and NECTIN4. Involved in axon guidance by promoting contacts between the commissural axons and the floor plate cells. Involved in synaptogegesis. Has some neurite outgrowth-promoting activity. Promotes formation of checkerboard-like cellular pattern of hair cells and supporting cells in the auditory epithelium via heterophilic interaction with NECTIN3: NECTIN1 is present in the membrane of hair cells and associates with NECTIN3 on supporting cells, thereby mediating heterotypic adhesion between these two cell types. Required for enamel mineralization. Functionally, (Microbial infection) Acts as a receptor for pseudorabies virus/PRV. The sequence is that of Nectin-1 from Mus musculus (Mouse).